The sequence spans 228 residues: Gliolectin (228 aa).

Residues 1–120 are Cytoplasmic-facing; that stretch reads MLCPPMALGP…NPKAVSQAPR (120 aa). A helical; Signal-anchor for type II membrane protein transmembrane segment spans residues 121–137; it reads GMALTPAQISASAKLIL. Residues 138 to 228 are Extracellular-facing; it reads QKCPESDRKK…GTSELADQKQ (91 aa). The interval 141–228 is disordered; sequence PESDRKKSNG…GTSELADQKQ (88 aa). 6 N-linked (GlcNAc...) asparagine glycosylation sites follow: N149, N156, N198, N199, N205, and N218. Residues 195 to 213 show a composition bias toward low complexity; the sequence is NNNNNSSSSNNNSNMNINN. A compositionally biased stretch (polar residues) spans 218-228; that stretch reads NGTSELADQKQ.

Expressed by a subset of glial cells found at the midline of the embryo stage 12 nervous system. Expression is highest during the formation of the embryonic axonal commissures, a process requiring midline glial cell function (at protein level).

The protein resides in the membrane. In terms of biological role, has a role in intercellular carbohydrate-mediated cell adhesion. The polypeptide is Gliolectin (Drosophila melanogaster (Fruit fly)).